The following is a 279-amino-acid chain: Undecaprenyl-diphosphatase (279 aa).

Helical transmembrane passes span 45-65 (FVEM…IVIY), 85-105 (WQLW…ALPF), 113-133 (FNFM…FIWV), 188-208 (SVAA…YSGL), 226-246 (LILL…IRFL), and 255-275 (FTIF…YWLV).

Belongs to the UppP family.

The protein resides in the cell membrane. The catalysed reaction is di-trans,octa-cis-undecaprenyl diphosphate + H2O = di-trans,octa-cis-undecaprenyl phosphate + phosphate + H(+). Catalyzes the dephosphorylation of undecaprenyl diphosphate (UPP). Confers resistance to bacitracin. The sequence is that of Undecaprenyl-diphosphatase from Streptococcus agalactiae serotype Ia (strain ATCC 27591 / A909 / CDC SS700).